A 442-amino-acid polypeptide reads, in one-letter code: Putative protein YjbI (442 aa).

The sequence is that of Putative protein YjbI (yjbI) from Escherichia coli (strain K12).